A 128-amino-acid chain; its full sequence is Cytochrome c oxidase subunit 5B, mitochondrial (128 aa).

The transit peptide at 1-30 (MKRGSAALEVRELKMQTPTASCVLSTQRAN) directs the protein to the mitochondrion. An N6-acetyllysine mark is found at K67 and K85. Zn(2+) is bound by residues C90, C92, C112, and C115. K120 bears the N6-acetyllysine mark.

The protein belongs to the cytochrome c oxidase 5b family. Expressed in testis. Not expressed in brain, heart, liver, kidney, spleen, lung, duodenum, muscle, epididymis, vagina, uterus and ovary.

It is found in the mitochondrion inner membrane. In terms of biological role, this protein is one of the nuclear-coded polypeptide chains of cytochrome c oxidase, the terminal oxidase in mitochondrial electron transport. This chain is Cytochrome c oxidase subunit 5B, mitochondrial, found in Vulpes vulpes (Red fox).